The chain runs to 500 residues: Enolase (500 aa).

The substrate site is built by His225 and Glu234. Residue Glu277 is the Proton donor of the active site. Residues Asp312, Glu361, and Asp386 each contribute to the Mg(2+) site. Residues Glu361 and Asp386 each coordinate substrate. The active-site Proton acceptor is Lys411. Residues 438–441 and Lys462 contribute to the substrate site; that span reads SHRS.

The protein belongs to the enolase family. As to quaternary structure, homodimer. The cofactor is Mg(2+).

The protein resides in the cytoplasm. The catalysed reaction is (2R)-2-phosphoglycerate = phosphoenolpyruvate + H2O. Its pathway is carbohydrate degradation; glycolysis; pyruvate from D-glyceraldehyde 3-phosphate: step 4/5. Functionally, enzyme of the glycolytic pathway. Glycolysis is essential in glial cells but not in neurons; neurons rely on the citric acid cycle for their energy needs, and on lactate and alanine secreted into the hemolymph by glial cells to fuel it. The sequence is that of Enolase from Drosophila melanogaster (Fruit fly).